A 436-amino-acid chain; its full sequence is ATP-dependent protease ATPase subunit HslU (436 aa).

Residues Ile19, 61–65 (GVGKT), Asp249, Glu314, and Arg386 contribute to the ATP site.

It belongs to the ClpX chaperone family. HslU subfamily. As to quaternary structure, a double ring-shaped homohexamer of HslV is capped on each side by a ring-shaped HslU homohexamer. The assembly of the HslU/HslV complex is dependent on binding of ATP.

The protein resides in the cytoplasm. ATPase subunit of a proteasome-like degradation complex; this subunit has chaperone activity. The binding of ATP and its subsequent hydrolysis by HslU are essential for unfolding of protein substrates subsequently hydrolyzed by HslV. HslU recognizes the N-terminal part of its protein substrates and unfolds these before they are guided to HslV for hydrolysis. This Bartonella tribocorum (strain CIP 105476 / IBS 506) protein is ATP-dependent protease ATPase subunit HslU.